Consider the following 206-residue polypeptide: RNA pyrophosphohydrolase (206 aa).

Residues 6–150 enclose the Nudix hydrolase domain; it reads GYRPNVGIVI…KRDVYRKVMK (145 aa). Residues 38–59 carry the Nudix box motif; it reads GGINEGENIETAMYRELYEEVG. The span at 162–191 shows a compositional bias: basic and acidic residues; the sequence is KPETVEKPRVERTEKRDFQKRDNQKREFRK. Residues 162-206 are disordered; it reads KPETVEKPRVERTEKRDFQKRDNQKREFRKSARMWNNSHQKGKAQ.

This sequence belongs to the Nudix hydrolase family. RppH subfamily. The cofactor is a divalent metal cation.

Functionally, accelerates the degradation of transcripts by removing pyrophosphate from the 5'-end of triphosphorylated RNA, leading to a more labile monophosphorylated state that can stimulate subsequent ribonuclease cleavage. In Actinobacillus pleuropneumoniae serotype 5b (strain L20), this protein is RNA pyrophosphohydrolase.